The chain runs to 343 residues: Programmed cell death protein 2 (343 aa).

Residues C134, C137, C145, C148, C154, H158, H167, and C171 each coordinate Zn(2+). The segment at 134–171 adopts an MYND-type; atypical zinc-finger fold; that stretch reads CRVCGCLAPMTCSRCKQAHYCSKEHQTLDWRLGHKQAC.

Ubiquitinated by PRKN, promoting proteasomal degradation.

It is found in the nucleus. May be a DNA-binding protein with a regulatory function. May play an important role in cell death and/or in regulation of cell proliferation. The polypeptide is Programmed cell death protein 2 (Pdcd2) (Mus musculus (Mouse)).